The primary structure comprises 743 residues: Glycerol dehydrogenase large subunit (743 aa).

The first 24 residues, 1–24 (MRRSHLLATVACATLACAPLAANA), serve as a signal peptide directing secretion. Over residues 27-41 (APAGSGGSPTSSVPG) the composition is skewed to low complexity. Disordered regions lie at residues 27 to 115 (APAG…GHDD) and 445 to 474 (ILPV…STGM).

This sequence belongs to the bacterial PQQ dehydrogenase family. It depends on pyrroloquinoline quinone as a cofactor.

It localises to the secreted. The enzyme catalyses glycerol + A = dihydroxyacetone + AH2. In terms of biological role, catalyzes the oxidation of glycerol to glycerone. Also acts, more slowly, on a number of other polyols including D-sorbitol, D-arabinitol, D-mannitol, meso-erythritol, adonitol and propylene glycol. This Gluconobacter oxydans (strain 621H) (Gluconobacter suboxydans) protein is Glycerol dehydrogenase large subunit (sldA).